Consider the following 544-residue polypeptide: Chaperonin GroEL 2 (544 aa).

Residues Thr29–Pro32, Asp86–Thr90, Gly413, and Asp495 each bind ATP. Residues Pro525–Tyr544 are disordered. Positions Ala533 to Tyr544 are enriched in gly residues.

This sequence belongs to the chaperonin (HSP60) family. Forms a cylinder of 14 subunits composed of two heptameric rings stacked back-to-back. Interacts with the co-chaperonin GroES.

Its subcellular location is the cytoplasm. It carries out the reaction ATP + H2O + a folded polypeptide = ADP + phosphate + an unfolded polypeptide.. Its function is as follows. Together with its co-chaperonin GroES, plays an essential role in assisting protein folding. The GroEL-GroES system forms a nano-cage that allows encapsulation of the non-native substrate proteins and provides a physical environment optimized to promote and accelerate protein folding. The polypeptide is Chaperonin GroEL 2 (Synechococcus sp. (strain JA-3-3Ab) (Cyanobacteria bacterium Yellowstone A-Prime)).